A 545-amino-acid chain; its full sequence is T-complex protein 1 subunit gamma (545 aa).

Met1 bears the N-acetylmethionine mark. The disordered stretch occupies residues 1-24 (MMGHRPVLVLSQNTKRESGRKVQS). The residue at position 11 (Ser11) is a Phosphoserine. Lys15 participates in a covalent cross-link: Glycyl lysine isopeptide (Lys-Gly) (interchain with G-Cter in SUMO2). ADP is bound at residue Gly42. Gly42 serves as a coordination point for ATP. Asp93 serves as a coordination point for Mg(2+). Residues Gly94, Thr95, Thr96, Ser97, Thr162, and Lys163 each coordinate ADP. ATP-binding residues include Gly94, Thr95, and Thr96. Ser170 bears the Phosphoserine mark. Lys222 carries the post-translational modification N6-acetyllysine. Residues Ser243 and Ser244 each carry the phosphoserine modification. Tyr247 carries the post-translational modification Phosphotyrosine. Residues Lys248 and Lys249 each participate in a glycyl lysine isopeptide (Lys-Gly) (interchain with G-Cter in SUMO2) cross-link. Ser252 bears the Phosphoserine mark. A disulfide bridge connects residues Cys366 and Cys372. Lys381 is covalently cross-linked (Glycyl lysine isopeptide (Lys-Gly) (interchain with G-Cter in SUMO2)). Gly411 serves as a coordination point for ADP. An ATP-binding site is contributed by Gly411. Residues Thr430 and Thr459 each carry the phosphothreonine modification. Gly482, Glu483, Glu497, and Lys502 together coordinate ADP. Gly482 contacts ATP. Glu497 provides a ligand contact to ATP. Residues 526–545 (HKKKGDDQSRQGGAPDAGQE) are disordered.

This sequence belongs to the TCP-1 chaperonin family. In terms of assembly, component of the chaperonin-containing T-complex (TRiC), a hexadecamer composed of two identical back-to-back stacked rings enclosing a protein folding chamber. Each ring is made up of eight different subunits: TCP1/CCT1, CCT2, CCT3, CCT4, CCT5, CCT6A/CCT6, CCT7, CCT8. Interacts with PACRG. Interacts with DNAAF4. Interacts with DLEC1.

It is found in the cytoplasm. It carries out the reaction ATP + H2O = ADP + phosphate + H(+). Component of the chaperonin-containing T-complex (TRiC), a molecular chaperone complex that assists the folding of actin, tubulin and other proteins upon ATP hydrolysis. The TRiC complex mediates the folding of WRAP53/TCAB1, thereby regulating telomere maintenance. As part of the TRiC complex may play a role in the assembly of BBSome, a complex involved in ciliogenesis regulating transports vesicles to the cilia. The sequence is that of T-complex protein 1 subunit gamma (CCT3) from Pongo abelii (Sumatran orangutan).